The chain runs to 181 residues: Large ribosomal subunit protein uL6 (181 aa).

The protein belongs to the universal ribosomal protein uL6 family. In terms of assembly, part of the 50S ribosomal subunit.

Its function is as follows. This protein binds to the 23S rRNA, and is important in its secondary structure. It is located near the subunit interface in the base of the L7/L12 stalk, and near the tRNA binding site of the peptidyltransferase center. The polypeptide is Large ribosomal subunit protein uL6 (Vesicomyosocius okutanii subsp. Calyptogena okutanii (strain HA)).